The chain runs to 293 residues: Proteinase T (293 aa).

A propeptide spanning residues 1-12 (EFIEQDAVVTIS) is cleaved from the precursor. The region spanning 19–293 (PWGLARISSQ…VLINNGEGSA (275 aa)) is the Peptidase S8 domain. Disulfide bonds link Cys-46/Cys-137 and Cys-192/Cys-262. Residues Asp-51, His-83, and Ser-238 each act as charge relay system in the active site.

This sequence belongs to the peptidase S8 family.

Functionally, serine proteinase. The chain is Proteinase T (PROT) from Parengyodontium album (Tritirachium album).